The chain runs to 218 residues: Pyrrolidone-carboxylate peptidase (218 aa).

Catalysis depends on residues Glu-81, Cys-144, and His-169.

This sequence belongs to the peptidase C15 family. Homotetramer.

It localises to the cytoplasm. It catalyses the reaction Release of an N-terminal pyroglutamyl group from a polypeptide, the second amino acid generally not being Pro.. Functionally, removes 5-oxoproline from various penultimate amino acid residues except L-proline. The polypeptide is Pyrrolidone-carboxylate peptidase (pcp) (Deinococcus radiodurans (strain ATCC 13939 / DSM 20539 / JCM 16871 / CCUG 27074 / LMG 4051 / NBRC 15346 / NCIMB 9279 / VKM B-1422 / R1)).